A 329-amino-acid polypeptide reads, in one-letter code: Ketol-acid reductoisomerase (NADP(+)) (329 aa).

In terms of domain architecture, KARI N-terminal Rossmann spans 1–181 (MKVYYENDAD…GATRSGVLQT (181 aa)). Residues 24-27 (YGSQ), R47, and 82-85 (DQVQ) each bind NADP(+). H107 is a catalytic residue. Residue G133 coordinates NADP(+). The region spanning 182-327 (TFREETETDL…GELRKMMSWL (146 aa)) is the KARI C-terminal knotted domain. D190, E194, E226, and E230 together coordinate Mg(2+). S251 contributes to the substrate binding site.

This sequence belongs to the ketol-acid reductoisomerase family. Mg(2+) is required as a cofactor.

It carries out the reaction (2R)-2,3-dihydroxy-3-methylbutanoate + NADP(+) = (2S)-2-acetolactate + NADPH + H(+). The catalysed reaction is (2R,3R)-2,3-dihydroxy-3-methylpentanoate + NADP(+) = (S)-2-ethyl-2-hydroxy-3-oxobutanoate + NADPH + H(+). Its pathway is amino-acid biosynthesis; L-isoleucine biosynthesis; L-isoleucine from 2-oxobutanoate: step 2/4. The protein operates within amino-acid biosynthesis; L-valine biosynthesis; L-valine from pyruvate: step 2/4. In terms of biological role, involved in the biosynthesis of branched-chain amino acids (BCAA). Catalyzes an alkyl-migration followed by a ketol-acid reduction of (S)-2-acetolactate (S2AL) to yield (R)-2,3-dihydroxy-isovalerate. In the isomerase reaction, S2AL is rearranged via a Mg-dependent methyl migration to produce 3-hydroxy-3-methyl-2-ketobutyrate (HMKB). In the reductase reaction, this 2-ketoacid undergoes a metal-dependent reduction by NADPH to yield (R)-2,3-dihydroxy-isovalerate. This chain is Ketol-acid reductoisomerase (NADP(+)), found in Maridesulfovibrio salexigens (strain ATCC 14822 / DSM 2638 / NCIMB 8403 / VKM B-1763) (Desulfovibrio salexigens).